A 603-amino-acid polypeptide reads, in one-letter code: Polypeptide N-acetylgalactosaminyltransferase 10 (603 aa).

Residues 1–11 (MRRKEKRLLQA) are Cytoplasmic-facing. A helical; Signal-anchor for type II membrane protein transmembrane segment spans residues 12–31 (VALALAALVLLPNVGLWALY). Over 32–603 (RERQPDGSPG…STVLENFNRN (572 aa)) the chain is Lumenal. N-linked (GlcNAc...) asparagine glycans are attached at residues asparagine 124 and asparagine 146. Disulfide bonds link cysteine 135–cysteine 365, cysteine 356–cysteine 432, cysteine 471–cysteine 488, cysteine 523–cysteine 538, and cysteine 563–cysteine 578. Residues 144–253 (LPNTSIIIPF…VNWLPPLLDR (110 aa)) are catalytic subdomain A. Residues aspartate 185 and arginine 214 each coordinate substrate. Aspartate 237 is a binding site for Mn(2+). Serine 238 contacts substrate. Residue histidine 239 coordinates Mn(2+). The segment at 311–373 (PFESPVMAGG…PCSRVGHIYR (63 aa)) is catalytic subdomain B. Residue tryptophan 342 participates in substrate binding. Histidine 370 is a Mn(2+) binding site. The substrate site is built by arginine 373 and tyrosine 378. The segment at 373 to 384 (RKYVPYKVPAGV) is flexible loop. The Ricin B-type lectin domain maps to 458–590 (AAWGEIRNVG…SSLTQQWLFE (133 aa)). The N-linked (GlcNAc...) asparagine glycan is linked to asparagine 593.

It belongs to the glycosyltransferase 2 family. GalNAc-T subfamily. Requires Mn(2+) as cofactor. As to expression, highly expressed in the sublingual gland, testis, small intestine, colon and ovary. Expressed at intermediate level in heart, brain, spleen, lung, stomach, cervix and uterus.

The protein resides in the golgi apparatus membrane. The catalysed reaction is L-seryl-[protein] + UDP-N-acetyl-alpha-D-galactosamine = a 3-O-[N-acetyl-alpha-D-galactosaminyl]-L-seryl-[protein] + UDP + H(+). The enzyme catalyses L-threonyl-[protein] + UDP-N-acetyl-alpha-D-galactosamine = a 3-O-[N-acetyl-alpha-D-galactosaminyl]-L-threonyl-[protein] + UDP + H(+). It participates in protein modification; protein glycosylation. Its function is as follows. Catalyzes the initial reaction in O-linked oligosaccharide biosynthesis, the transfer of an N-acetyl-D-galactosamine residue to a serine or threonine residue on the protein receptor. Has activity toward Muc5Ac and EA2 peptide substrates. The protein is Polypeptide N-acetylgalactosaminyltransferase 10 (Galnt10) of Rattus norvegicus (Rat).